A 183-amino-acid chain; its full sequence is CASP-like protein UU1 (183 aa).

At 1–33 (MEESQQQSTKFDAPPSPYVPSRVYLAQIYWKKP) the chain is on the cytoplasmic side. A helical membrane pass occupies residues 34-54 (AIVVLRVLQFVFSLIAFSVMA). The Extracellular portion of the chain corresponds to 55–72 (DLLHDVQGSIKSLSYTVA). Residues 73–93 (IGVLACAYALAQLSFSLWCVI) traverse the membrane as a helical segment. The Cytoplasmic segment spans residues 94-118 (RGATSSSGVTPLYQYATFICDQMST). A helical membrane pass occupies residues 119-139 (YFLISAASATATLIDVSGVCG). Over 140 to 156 (SNGSGTNLCSRSTASVT) the chain is Extracellular. The N-linked (GlcNAc...) asparagine glycan is linked to Asn141. The chain crosses the membrane as a helical span at residues 157–177 (FAFLAFLAFSASSVLTGYYLV). Residues 178–183 (KCILKA) are Cytoplasmic-facing.

It belongs to the Casparian strip membrane proteins (CASP) family. As to quaternary structure, homodimer and heterodimers.

Its subcellular location is the cell membrane. This chain is CASP-like protein UU1, found in Selaginella moellendorffii (Spikemoss).